Consider the following 166-residue polypeptide: Small ribosomal subunit protein uS5 (166 aa).

One can recognise an S5 DRBM domain in the interval 10 to 73 (QIEKLISLNR…TSARKNLRFV (64 aa)).

Belongs to the universal ribosomal protein uS5 family. Part of the 30S ribosomal subunit. Contacts proteins S4 and S8.

Its function is as follows. With S4 and S12 plays an important role in translational accuracy. Located at the back of the 30S subunit body where it stabilizes the conformation of the head with respect to the body. The sequence is that of Small ribosomal subunit protein uS5 from Borrelia garinii subsp. bavariensis (strain ATCC BAA-2496 / DSM 23469 / PBi) (Borreliella bavariensis).